The primary structure comprises 152 residues: 3-hydroxyacyl-[acyl-carrier-protein] dehydratase FabZ (152 aa).

H54 is a catalytic residue.

Belongs to the thioester dehydratase family. FabZ subfamily.

The protein localises to the cytoplasm. The enzyme catalyses a (3R)-hydroxyacyl-[ACP] = a (2E)-enoyl-[ACP] + H2O. Its function is as follows. Involved in unsaturated fatty acids biosynthesis. Catalyzes the dehydration of short chain beta-hydroxyacyl-ACPs and long chain saturated and unsaturated beta-hydroxyacyl-ACPs. The polypeptide is 3-hydroxyacyl-[acyl-carrier-protein] dehydratase FabZ (Roseobacter denitrificans (strain ATCC 33942 / OCh 114) (Erythrobacter sp. (strain OCh 114))).